A 179-amino-acid polypeptide reads, in one-letter code: MARLKEIYRNEIAPKLKNELQLVNVMEVPRITKITLNMGLGEAVGDKKVIENAVADLEKITGQKPVVTYARKSIAGFKIREGWPIGVKVTLRRDRMYEFLDRLLSISLPRVRDFRGLNAKSFDGRGNYSMGVKEQIIFPEIDYDKIDALRGLDITLTTTARTDDEGRALLRAFNFPFRN.

This sequence belongs to the universal ribosomal protein uL5 family. As to quaternary structure, part of the 50S ribosomal subunit; part of the 5S rRNA/L5/L18/L25 subcomplex. Contacts the 5S rRNA and the P site tRNA. Forms a bridge to the 30S subunit in the 70S ribosome.

Functionally, this is one of the proteins that bind and probably mediate the attachment of the 5S RNA into the large ribosomal subunit, where it forms part of the central protuberance. In the 70S ribosome it contacts protein S13 of the 30S subunit (bridge B1b), connecting the 2 subunits; this bridge is implicated in subunit movement. Contacts the P site tRNA; the 5S rRNA and some of its associated proteins might help stabilize positioning of ribosome-bound tRNAs. This chain is Large ribosomal subunit protein uL5, found in Azotobacter vinelandii (strain DJ / ATCC BAA-1303).